Consider the following 188-residue polypeptide: Threonylcarbamoyl-AMP synthase (188 aa).

In terms of domain architecture, YrdC-like spans 3–188; the sequence is QLHPSEIKDI…RSGKILRNGQ (186 aa).

It belongs to the SUA5 family. TsaC subfamily.

The protein resides in the cytoplasm. It carries out the reaction L-threonine + hydrogencarbonate + ATP = L-threonylcarbamoyladenylate + diphosphate + H2O. Required for the formation of a threonylcarbamoyl group on adenosine at position 37 (t(6)A37) in tRNAs that read codons beginning with adenine. Catalyzes the conversion of L-threonine, HCO(3)(-)/CO(2) and ATP to give threonylcarbamoyl-AMP (TC-AMP) as the acyladenylate intermediate, with the release of diphosphate. This chain is Threonylcarbamoyl-AMP synthase, found in Shewanella sp. (strain MR-4).